The following is a 239-amino-acid chain: MTAYKRVLLKLSGESLMGAQQYGIDPNRLADYASDIKEACAMGVQIGIVIGGGNIFRGVSGAAKGFDRVKGDQMGMLATVINSLALSSALEGVGVKTKVLTAVRMEPIGEFYNKWHAIELLEQGYVTIFSCGTGNPFFTTDTGSSLRGIEIEADAMLKGTRVDGIYTADPEKDPSATKFDRITYDEIYARGLKVMDLTATAMCMENNLPIVVFDMDTPGNLLKVLRGEKIGTYVSNTSA.

10–13 is an ATP binding site; that stretch reads KLSG. G52 lines the UMP pocket. ATP-binding residues include G53 and R57. UMP contacts are provided by residues D72 and 133–140; that span reads TGNPFFTT. ATP-binding residues include T160, Y166, and D169.

This sequence belongs to the UMP kinase family. Homohexamer.

Its subcellular location is the cytoplasm. The catalysed reaction is UMP + ATP = UDP + ADP. The protein operates within pyrimidine metabolism; CTP biosynthesis via de novo pathway; UDP from UMP (UMPK route): step 1/1. Its activity is regulated as follows. Inhibited by UTP. Functionally, catalyzes the reversible phosphorylation of UMP to UDP. This chain is Uridylate kinase, found in Porphyromonas gingivalis (strain ATCC BAA-308 / W83).